Consider the following 527-residue polypeptide: Bifunctional purine biosynthesis protein PurH (527 aa).

The region spanning 1–144 is the MGS-like domain; that stretch reads MNRRALISVS…KNHESVAIIV (144 aa).

This sequence belongs to the PurH family.

The enzyme catalyses (6R)-10-formyltetrahydrofolate + 5-amino-1-(5-phospho-beta-D-ribosyl)imidazole-4-carboxamide = 5-formamido-1-(5-phospho-D-ribosyl)imidazole-4-carboxamide + (6S)-5,6,7,8-tetrahydrofolate. It carries out the reaction IMP + H2O = 5-formamido-1-(5-phospho-D-ribosyl)imidazole-4-carboxamide. The protein operates within purine metabolism; IMP biosynthesis via de novo pathway; 5-formamido-1-(5-phospho-D-ribosyl)imidazole-4-carboxamide from 5-amino-1-(5-phospho-D-ribosyl)imidazole-4-carboxamide (10-formyl THF route): step 1/1. Its pathway is purine metabolism; IMP biosynthesis via de novo pathway; IMP from 5-formamido-1-(5-phospho-D-ribosyl)imidazole-4-carboxamide: step 1/1. The protein is Bifunctional purine biosynthesis protein PurH of Heliobacterium modesticaldum (strain ATCC 51547 / Ice1).